Reading from the N-terminus, the 147-residue chain is Hemoglobin subunit beta-3 (147 aa).

A Globin domain is found at 2-147 (EWTDAERTAI…VTSALSRQYH (146 aa)). Residues histidine 63 and histidine 92 each coordinate heme b.

It belongs to the globin family. As to quaternary structure, heterotetramer of two alpha chains and two beta chains. In terms of tissue distribution, red blood cells.

Involved in oxygen transport from gills to the various peripheral tissues. In Muraena helena (Mediterranean moray), this protein is Hemoglobin subunit beta-3 (hbb3).